The following is a 290-amino-acid chain: MSVIEIRSYQHWISTIPKSGYLAVDCYADWCGPCKAISPLFSQLASKYASPKFVFAKVNVDEQRQIASGLGVKAMPTFVFFENGKQIDMLTGANPQALKEKVALISSKATGTGALASSSSAPVKGFASLQGCIENPQLECLNQQDDHDLKSAFNSNPSSFLESDVDEQLMIYIPFLEVVKVHSIAITPVKGETSSAPKTIKLYINQPNNLSFEDAESFTPTQVIEDIVYEQDDQPTIIPLRFVKFQRVNSLVIFIYSNVGEEETTKISRLELFGEPVGDSSKGKLQKVEA.

Residues 24–104 (VDCYADWCGP…PQALKEKVAL (81 aa)) form the Thioredoxin domain. The cysteines at positions 31 and 34 are disulfide-linked. Residues 118-290 (SSSAPVKGFA…SKGKLQKVEA (173 aa)) form the PITH domain.

The protein resides in the cytoplasm. Its subcellular location is the nucleus. Its function is as follows. Has a role in cellular detoxification of alkyl hydroperoxide. In Schizosaccharomyces pombe (strain 972 / ATCC 24843) (Fission yeast), this protein is Thioredoxin-like protein 1 (txl1).